A 185-amino-acid polypeptide reads, in one-letter code: Ribosome-recycling factor (185 aa).

Belongs to the RRF family.

The protein localises to the cytoplasm. Responsible for the release of ribosomes from messenger RNA at the termination of protein biosynthesis. May increase the efficiency of translation by recycling ribosomes from one round of translation to another. This chain is Ribosome-recycling factor, found in Buchnera aphidicola subsp. Acyrthosiphon pisum (strain 5A).